The chain runs to 319 residues: Formimidoylglutamase (319 aa).

Mn(2+) is bound by residues His131, Asp154, His156, Asp158, Cys248, and Asp250.

It belongs to the arginase family. Mn(2+) is required as a cofactor.

It carries out the reaction N-formimidoyl-L-glutamate + H2O = formamide + L-glutamate. The protein operates within amino-acid degradation; L-histidine degradation into L-glutamate; L-glutamate from N-formimidoyl-L-glutamate (hydrolase route): step 1/1. Catalyzes the conversion of N-formimidoyl-L-glutamate to L-glutamate and formamide. The chain is Formimidoylglutamase from Legionella pneumophila (strain Paris).